The following is a 2155-amino-acid chain: Polyketide synthase 2 (2155 aa).

The interval 7-244 (FIFGDQTGGF…IPIPIWAPYH (238 aa)) is N-terminal acylcarrier protein transacylase domain (SAT). Residues 374–807 (DSKIAIIGMS…GGNSALLLED (434 aa)) enclose the Ketosynthase family 3 (KS3) domain. Catalysis depends on for beta-ketoacyl synthase activity residues C546, H681, and H723. A malonyl-CoA:ACP transacylase (MAT) domain region spans residues 908–1213 (GFVFSGQGAQ…ASLHRKDDGW (306 aa)). S998 serves as the catalytic For acyl/malonyl transferase activity. Residues 1290-1605 (TSSVQRIIRQ…RSLLNKVLPP (316 aa)) are product template (PT) domain. The tract at residues 1294–1428 (QRIIRQTDGP…CLLRFADPTS (135 aa)) is N-terminal hotdog fold. The PKS/mFAS DH domain maps to 1294 to 1600 (QRIIRQTDGP…FLGMSRSLLN (307 aa)). H1327 functions as the Proton acceptor; for dehydratase activity in the catalytic mechanism. The interval 1455–1600 (TDSLLSKGIV…FLGMSRSLLN (146 aa)) is C-terminal hotdog fold. Catalysis depends on D1514, which acts as the Proton donor; for dehydratase activity. Residues 1626 to 1654 (AASAKDTERRPLDIPTRAQRQPSSPQTGT) form a disordered region. Polar residues predominate over residues 1643 to 1654 (AQRQPSSPQTGT). The region spanning 1649–1726 (SPQTGTMGRI…ELKAFLGADQ (78 aa)) is the Carrier 1 domain. O-(pantetheine 4'-phosphoryl)serine is present on S1686. The disordered stretch occupies residues 1735–1765 (SSIGQHTPQTSDKGSGTLASQKTDGDTGPDT). Over residues 1736-1756 (SIGQHTPQTSDKGSGTLASQK) the composition is skewed to polar residues. A Carrier 2 domain is found at 1764–1838 (DTTLNRVCAI…ALQKALCGSE (75 aa)). O-(pantetheine 4'-phosphoryl)serine is present on S1798. A thioesterase (TE) domain region spans residues 1873-2149 (ASPPHATSIL…MVEMGNLIGD (277 aa)). Residue S1979 is the For thioesterase activity of the active site.

Functionally, polyketide synthase; part of the Pks2 gene cluster that mediates the formation of infectious structures (appressoria), enabling these fungi to kill insects faster. The product of the Pks2 gene cluster is different from the one of Pks1 and has still not been identified. The chain is Polyketide synthase 2 from Metarhizium anisopliae (strain ARSEF 549).